The primary structure comprises 331 residues: WW domain-containing protein C2F3.14c (331 aa).

Residues 1–184 form a disordered region; the sequence is MSSSKDCKAT…TNENQAQPSI (184 aa). Residues 9 to 22 are compositionally biased toward polar residues; that stretch reads ATSNVDQTIPASNV. Over residues 23-41 the composition is skewed to low complexity; that stretch reads NSGDFISSNTSSSNSENSN. Residues 57 to 89 are compositionally biased toward polar residues; sequence SFISENTPKNTFESTQTYENLESISKNEPTSEA. Residues 105 to 145 are compositionally biased toward pro residues; sequence REPPLPNEPVPEEPLPGEPPLPDEPVPEEPLPGEPPLPNEP. Polar residues predominate over residues 158-184; sequence SDETVSETSKNDTSNSPTNENQAQPSI. Positions 187-220 constitute a WW domain; the sequence is SEGHRIAAIWDPSQQAYYFWDTLTNTTSWNNPLE. Residues 290-309 are disordered; it reads YTRKEMEQMKRRTKEKKEMK. A compositionally biased stretch (basic and acidic residues) spans 292 to 309; the sequence is RKEMEQMKRRTKEKKEMK.

It localises to the nucleus. This Schizosaccharomyces pombe (strain 972 / ATCC 24843) (Fission yeast) protein is WW domain-containing protein C2F3.14c.